The sequence spans 629 residues: Phosphomethylpyrimidine synthase (629 aa).

Positions 1-30 (MTTKLKNASNLSESAQVDQQSVQPFTRSQK) are disordered. Substrate contacts are provided by residues Asn-233, Met-262, Tyr-291, His-327, 347–349 (SRG), 388–391 (DGLR), and Glu-427. His-431 serves as a coordination point for Zn(2+). Position 454 (Tyr-454) interacts with substrate. Position 495 (His-495) interacts with Zn(2+). 3 residues coordinate [4Fe-4S] cluster: Cys-575, Cys-578, and Cys-583.

The protein belongs to the ThiC family. As to quaternary structure, homodimer. The cofactor is [4Fe-4S] cluster.

It carries out the reaction 5-amino-1-(5-phospho-beta-D-ribosyl)imidazole + S-adenosyl-L-methionine = 4-amino-2-methyl-5-(phosphooxymethyl)pyrimidine + CO + 5'-deoxyadenosine + formate + L-methionine + 3 H(+). Its pathway is cofactor biosynthesis; thiamine diphosphate biosynthesis. In terms of biological role, catalyzes the synthesis of the hydroxymethylpyrimidine phosphate (HMP-P) moiety of thiamine from aminoimidazole ribotide (AIR) in a radical S-adenosyl-L-methionine (SAM)-dependent reaction. The sequence is that of Phosphomethylpyrimidine synthase from Pseudomonas fluorescens (strain ATCC BAA-477 / NRRL B-23932 / Pf-5).